Consider the following 300-residue polypeptide: F-box protein SKIP1 (300 aa).

An F-box; degenerate domain is found at 11–52 (LAPEILINIISRLTIQELWTGPMFVQKSWLTVCRDPYLWSIF).

In terms of assembly, part of a SCF (ASK-cullin-F-box) protein ligase complex. Interacts with SKP1A/ASK1 and SKP1B/ASK2.

It localises to the nucleus. It functions in the pathway protein modification; protein ubiquitination. Its function is as follows. Component of SCF(ASK-cullin-F-box) E3 ubiquitin ligase complexes, which may mediate the ubiquitination and subsequent proteasomal degradation of target proteins. The chain is F-box protein SKIP1 (SKIP1) from Arabidopsis thaliana (Mouse-ear cress).